Here is a 235-residue protein sequence, read N- to C-terminus: uncharacterized protein (235 aa).

The segment at 37 to 235 (QNAKLNDGDN…GGEDYPWPWN (199 aa)) is disordered. The segment covering 72–89 (GSDDYSDVEDGGAEEGDS) has biased composition (acidic residues). The segment covering 112 to 124 (TSSTSTASTSSGS) has biased composition (low complexity). Positions 152-170 (RRPELDLSPKIENRSDSSS) are enriched in basic and acidic residues. A compositionally biased stretch (polar residues) spans 185–202 (NKDNPSRGQGNENPSASD).

It belongs to the herpesviridae BKRF4 family.

This is an uncharacterized protein from Alcelaphine herpesvirus 1 (strain C500) (AlHV-1).